Consider the following 488-residue polypeptide: Monothiol glutaredoxin-S17 (488 aa).

In terms of domain architecture, Thioredoxin spans 2 to 107 (SGTVKDIVSK…LANKVGKVAG (106 aa)). Glutaredoxin domains follow at residues 154 to 256 (KSRL…GITT), 284 to 386 (RARL…GITG), and 391 to 488 (EDRL…TLSE). Lys408 contributes to the glutathione binding site. Residue Cys416 coordinates [2Fe-2S] cluster. Glutathione-binding positions include Arg445, Phe457, and 470–471 (CD).

It belongs to the glutaredoxin family. CGFS subfamily. [2Fe-2S]-bridged holo-homodimer. Interacts in vitro with SUFE1, BOLA1, BOLA2 and BOLA4. Interacts in vivo only with BOLA2. Interacts with RGLG3 and RGLG4. Ubiquitinated at Lys-154. Polyubiquitinated by RGLG3 and RGLG4. Polyubiquitination of GRXS17 leads to its degradation by the proteasome.

The protein localises to the cytoplasm. Functionally, may only reduce GSH-thiol disulfides, but not protein disulfides. Participates probably to the maturation of iron-sulfur proteins and to the regulation of the redox state of the BOLA proteins. The GRXS17-BOLA2 heterodimer binds a labile, oxygen sensitive iron-sulfur cluster. The chain is Monothiol glutaredoxin-S17 from Arabidopsis thaliana (Mouse-ear cress).